Consider the following 227-residue polypeptide: Probable maleylacetoacetate isomerase 2 (227 aa).

The GST N-terminal domain maps to 14 to 97 (IQPILYSYWR…YLEETRPQRP (84 aa)). Residues 24-29 (SSCSWR), Gln-55, Val-69, 81-82 (ES), Gln-121, and 125-127 (NLI) each bind glutathione. One can recognise a GST C-terminal domain in the interval 102–222 (DVHKRAKVRE…HPSNQPDCPP (121 aa)).

The protein belongs to the GST superfamily. Zeta family. It depends on glutathione as a cofactor.

It is found in the cytoplasm. The enzyme catalyses 4-maleylacetoacetate = 4-fumarylacetoacetate. It carries out the reaction RX + glutathione = an S-substituted glutathione + a halide anion + H(+). It participates in amino-acid degradation; L-phenylalanine degradation; acetoacetate and fumarate from L-phenylalanine: step 5/6. Functionally, catalyzes the glutathione dependent oxygenation of dichloroacetic acid to glyoxylic acid in vitro. Has no glutathione thioltransferase activity with 4-hydroxynonenal (4-HNE), adrenochrome, phenethyl isothiocyanate (PEITC), 5-hydroperoxyeicosatetraenoic acid ((5S)-HpETE), prostaglandin A2 (PGA2) or 2-hydroxyethyldisulfide (HED). The protein is Probable maleylacetoacetate isomerase 2 (GstZ2) of Drosophila melanogaster (Fruit fly).